Here is a 69-residue protein sequence, read N- to C-terminus: U2-agatoxin-Ao1c (69 aa).

The first 20 residues, 1-20, serve as a signal peptide directing secretion; that stretch reads MKAIISLLLISAMVFSMIEA. Positions 21–34 are excised as a propeptide; it reads VPVEEGLQLFEGER. Cystine bridges form between Cys36/Cys52, Cys43/Cys57, and Cys51/Cys67. Leu68 carries the leucine amide modification.

This sequence belongs to the neurotoxin 01 (U2-agtx) family. In terms of tissue distribution, expressed by the venom gland.

Its subcellular location is the secreted. Insect active toxin causing rapid but reversible paralysis in crickets. No activity shown in mammals. Does not show effect on mammalian voltage-gated calcium channels. This is U2-agatoxin-Ao1c from Agelena orientalis (Funnel-web spider).